We begin with the raw amino-acid sequence, 344 residues long: MRVIRPVEHADIAALMQLAGKTGGGLTSLPANEATLAARIERALKTWSGELPKGEQGYVFVLEDSETGEVGGICAIEVAVGLNDPWYNYRVGTLVHASKELNVYNALPTLFLSNDHTGSSELCTLFLDPEWRKEGNGYLLSKSRFMFMAAFRDKFNEKVVAEMRGVIDEHGYSPFWQSLGKRFFSMDFSRADFLCGTGQKAFIAELMPKHPIYTHFLSEEAQAVIGEVHPQTAPARAVLEKEGFRYRHYIDIFDGGPTLECDIDRVRAIRKSRLVEVAEGQPAPGDYPACLVANENYHHFRAALVRADPQTSRLVLTAAQLDALKCRAGDHVRLVRLCAEEKTV.

L125 lines the succinyl-CoA pocket. H229 functions as the Proton donor in the catalytic mechanism.

The protein belongs to the arginine N-succinyltransferase family.

The enzyme catalyses succinyl-CoA + L-arginine = N(2)-succinyl-L-arginine + CoA + H(+). It functions in the pathway amino-acid degradation; L-arginine degradation via AST pathway; L-glutamate and succinate from L-arginine: step 1/5. Catalyzes the transfer of succinyl-CoA to arginine to produce N(2)-succinylarginine. The chain is Arginine N-succinyltransferase from Salmonella dublin (strain CT_02021853).